Reading from the N-terminus, the 553-residue chain is MDYNVKDFGALGDGVSDDRASIQAAIDAAYAAGGGTVYLPAGEYRVSAAGEPGDGCLMLKDGVYLAGAGMGETVIKLIDGSDQKITGMVRSAYGEETSNFGMRDLTLDGNRDNTSGKVDGWFNGYIPGGDGADRDVTIERVEVREMSGYGFDPHEQTINLTIRDSVAHDNGLDGFVADYLVDSVFENNVAYANDRHGFNVVTSTHDFVMTNNVAYGNGSSGLVVQRGLEDLALPSNILIDGGAYYDNAREGVLLKMTSDITLQNADIHGNGSSGVRVYGAQDVQILDNQIHDNAQAAAVPEVLLQSFDDTAGASGTYYTTLNTRIEGNTISGSANSTYGIQERNDGTDYSSLIDNDIAGVQQPIQLYGPHSTVSGEPGATPQQPSTGSDGEPLVGGDTDDQLQGGSGADRLDGGAGDDILDGGAGRDRLSGGAGADTFVFSAREDSYRTDTAVFNDLILDFEASEDRIDLSALGFSGLGDGYGGTLLLKTNAEGTRTYLKSFEADAEGRRFEVALDGDHTGDLSAANVVFAATGTTTELEVLGDSGTQAGAIV.

PbH1 repeat units lie at residues D133–E155, T157–Y179, L180–T202, T204–R226, P234–M256, T257–G279, A280–E301, and T320–E342. The disordered stretch occupies residues Y367–D427. Hemolysin-type calcium-binding repeat units follow at residues Q403–L420 and D421–F438.

This sequence belongs to the D-mannuronate C5-epimerase family. It depends on Ca(2+) as a cofactor.

It localises to the secreted. It catalyses the reaction [(1-&gt;4)-beta-D-mannuronosyl](n) = [alginate](n). The protein operates within glycan biosynthesis; alginate biosynthesis. With respect to regulation, inhibited by zinc. Functionally, converts beta-D-mannuronic acid (M) to alpha-L-guluronic acid (G), but introduces almost exclusively MG blocks, producing a polymer with non-gel-forming capacity. This Azotobacter vinelandii protein is Mannuronan C5-epimerase AlgE4.